We begin with the raw amino-acid sequence, 78 residues long: RNA-binding protein Hfq (78 aa).

A Sm domain is found at 10–69; that stretch reads DPFLNALRREHVPVSIYLVNGIKLQGQVESFDQYVVLLKNTVTQMVYKHAISTVVPARPV.

The protein belongs to the Hfq family. As to quaternary structure, homohexamer.

RNA chaperone that binds small regulatory RNA (sRNAs) and mRNAs to facilitate mRNA translational regulation in response to envelope stress, environmental stress and changes in metabolite concentrations. Also binds with high specificity to tRNAs. The polypeptide is RNA-binding protein Hfq (Dechloromonas aromatica (strain RCB)).